The primary structure comprises 249 residues: UPF0309 protein GTNG_1302 (249 aa).

The SIS domain occupies valine 31–proline 214.

Belongs to the UPF0309 family.

This Geobacillus thermodenitrificans (strain NG80-2) protein is UPF0309 protein GTNG_1302.